Reading from the N-terminus, the 147-residue chain is Hemoglobin subunit beta-3 (147 aa).

Residues 2-147 (EWTDAERTAI…VTSALSRQYH (146 aa)) form the Globin domain. His63 and His92 together coordinate heme b.

Belongs to the globin family. In terms of assembly, heterotetramer of two alpha chains and two beta chains. Red blood cells.

Involved in oxygen transport from gills to the various peripheral tissues. This chain is Hemoglobin subunit beta-3 (hbb3), found in Muraena helena (Mediterranean moray).